Here is a 663-residue protein sequence, read N- to C-terminus: Polyunsaturated fatty acid lipoxygenase ALOX12 (663 aa).

Residues 2–114 (GRYRIRVATG…ILSLPEGTAR (113 aa)) enclose the PLAT domain. The Lipoxygenase domain occupies 115–663 (LPGDNALDMF…PSCIENSVTI (549 aa)). S246 is modified (phosphoserine). 5 residues coordinate Fe cation: H360, H365, H540, N544, and I663.

The protein belongs to the lipoxygenase family. The cofactor is Fe cation. As to expression, expressed in vascular smooth muscle cells.

Its subcellular location is the cytoplasm. It localises to the cytosol. It is found in the membrane. It catalyses the reaction (5Z,8Z,11Z,14Z)-eicosatetraenoate + O2 = (12S)-hydroperoxy-(5Z,8Z,10E,14Z)-eicosatetraenoate. The catalysed reaction is (5Z,8Z,11Z,14Z)-eicosatetraenoate + O2 = (15S)-hydroperoxy-(5Z,8Z,11Z,13E)-eicosatetraenoate. The enzyme catalyses 2 leukotriene A4 + O2 + 2 H2O = 2 lipoxin A4. It carries out the reaction 2 leukotriene A4 + O2 + 2 H2O = 2 lipoxin B4. It catalyses the reaction (14S)-hydroperoxy-(4Z,7Z,10Z,12E,16Z,19Z)-docosahexaenoate = (13S,14S)-epoxy-(4Z,7Z,9E,11E,16Z,19Z)-docosahexaenoate + H2O. The catalysed reaction is N-(5Z,8Z,11Z,14Z)-eicosatetraenoyl-L-alanine + O2 = N-(15S)-hydroperoxy-(5Z,8Z,11Z,13E)-eicosatetraenoyl-alanine. The enzyme catalyses N-(5Z,8Z,11Z,14Z)-eicosatetraenoyl-L-alanine + O2 = N-(12S)-hydroperoxy-(5Z,8Z,10E,14Z)-eicosatetraenoyl-alanine. It carries out the reaction N-(5Z,8Z,11Z,14Z)-eicosatetraenoyl-gamma-aminobutanoate + O2 = N-(15S)-hydroperoxy-(5Z,8Z,11Z,13E)-eicosatetraenoyl-gamma-aminobutanoate. It catalyses the reaction N-(5Z,8Z,11Z,14Z)-eicosatetraenoyl-gamma-aminobutanoate + O2 = N-(12S)-hydroperoxy-(5Z,8Z,10E,14Z)-eicosatetraenoyl-gamma-aminobutanoate. The catalysed reaction is N-(5Z,8Z,11Z,14Z)-eicosatetraenoyl-glycine + O2 = N-(15S)-hydroperoxy-(5Z,8Z,11Z,13E)-eicosatetraenoyl-glycine. The enzyme catalyses N-(5Z,8Z,11Z,14Z)-eicosatetraenoyl-glycine + O2 = N-(12S)-hydroperoxy-(5Z,8Z,10E,14Z)-eicosatetraenoyl-glycine. It carries out the reaction N-(5Z,8Z,11Z,14Z)-eicosatetraenoyl-taurine + O2 = N-(12S)-hydroperoxy-(5Z,8Z,10E,14Z)-eicosatetraenoyl-taurine. It catalyses the reaction N-(5Z,8Z,11Z,14Z)-eicosatetraenoyl-taurine + O2 = N-(15S)-hydroperoxy-(5Z,8Z,11Z,13E)-eicosatetraenoyl-taurine. The catalysed reaction is (4Z,7Z,10Z,13Z,16Z,19Z)-docosahexaenoate + O2 = (14S)-hydroperoxy-(4Z,7Z,10Z,12E,16Z,19Z)-docosahexaenoate. The enzyme catalyses (7S)-hydroperoxy-(4Z,8E,10Z,13Z,16Z,19Z)-docosahexaenoate + O2 = (7S,14S)-dihydroperoxy-(4Z,8E,10Z,12E,16Z,19Z)-docosahexaenoate. It carries out the reaction (7S)-hydroperoxy-(4Z,8E,10Z,13Z,16Z,19Z)-docosahexaenoate + O2 = (7S,17S)-dihydroperoxy-(4Z,8E,10Z,13Z,15E,19Z)-docosahexaenoate. It catalyses the reaction (5Z,8Z,11Z,14Z,17Z)-eicosapentaenoate + O2 = (12S)-hydroperoxy-(5Z,8Z,10E,14Z,17Z)-eicosapentaenoate. The catalysed reaction is (8Z,11Z,14Z)-eicosatrienoate + O2 = (12S)-hydroperoxy-(8Z,10E,14Z)-eicosatrienoate. The enzyme catalyses (9Z,12Z)-octadecadienoate + O2 = (13S)-hydroperoxy-(9Z,11E)-octadecadienoate. It carries out the reaction (5Z,8Z,11Z)-eicosatrienoate + O2 = (12S)-hydroperoxy-(5Z,8Z,10E)-eicosatrienoate. It catalyses the reaction (14R,15S)-epoxy-(5Z,8Z,11Z)-eicosatrienoate + O2 = (12S)-hydroperoxy-(14R,15S)-epoxy-(5Z,8Z,10E)-eicosatrienoate. The catalysed reaction is (14S,15R)-epoxy-(5Z,8Z,11Z)-eicosatrienoate + O2 = (12S)-hydroperoxy-(14S,15R)-epoxy-(5Z,8Z,10E)-eicosatrienoate. It participates in lipid metabolism; hydroperoxy eicosatetraenoic acid biosynthesis. With respect to regulation, activated by EGF. Arachidonic acid conversion is inhibited by (13S,14S)-epoxy-(4Z,7Z,9E,11E,16Z,19Z)-docosahexaenoate (13S,14S-epoxy-DHA). Arachidonate 12-lipoxygenase activity is decreased when PH decreases from 7.4 to 6. Catalyzes the regio and stereo-specific incorporation of molecular oxygen into free and esterified polyunsaturated fatty acids generating lipid hydroperoxides that can be further reduced to the corresponding hydroxy species. Mainly converts arachidonate ((5Z,8Z,11Z,14Z)-eicosatetraenoate) to the specific bioactive lipid (12S)-hydroperoxyeicosatetraenoate/(12S)-HPETE. Through the production of bioactive lipids like (12S)-HPETE it regulates different biological processes including platelet activation. It can also catalyze the epoxidation of double bonds of polyunsaturated fatty acids such as (14S)-hydroperoxy-docosahexaenoate/(14S)-HPDHA resulting in the formation of (13S,14S)-epoxy-DHA. Furthermore, it may participate in the sequential oxidations of DHA ((4Z,7Z,10Z,13Z,16Z,19Z)-docosahexaenoate) to generate specialized pro-resolving mediators (SPMs) like resolvin D5 ((7S,17S)-diHPDHA) and (7S,14S)-diHPDHA, that actively down-regulate the immune response and have anti-aggregation properties with platelets. An additional function involves a multistep process by which it transforms leukotriene A4/LTA4 into the bioactive lipids lipoxin A4/LXA4 and lipoxin B4/LXB4, both are vasoactive and LXA4 may regulate neutrophil function via occupancy of specific recognition sites. Can also peroxidize linoleate ((9Z,12Z)-octadecadienoate) to (13S)-hydroperoxyoctadecadienoate/ (13S-HPODE). Due to its role in regulating both the expression of the vascular endothelial growth factor (VEGF, an angiogenic factor involved in the survival and metastasis of solid tumors) and the expression of integrin beta-1 (known to affect tumor cell migration and proliferation), it can be regarded as protumorigenic. Important for cell survival, as it may play a role not only in proliferation but also in the prevention of apoptosis in vascular smooth muscle cells. In Homo sapiens (Human), this protein is Polyunsaturated fatty acid lipoxygenase ALOX12.